The sequence spans 609 residues: Neutral protease (609 aa).

The signal sequence occupies residues 1 to 24 (MNKTQRHINWLLAVSAATALPVTA). The propeptide occupies 25 to 196 (AEMINVNDGS…VLQTWDGLNH (172 aa)). His343 is a binding site for Zn(2+). Glu344 is a catalytic residue. Zn(2+) contacts are provided by His347 and Glu367. His426 functions as the Proton donor in the catalytic mechanism.

It belongs to the peptidase M4 family. Zn(2+) is required as a cofactor.

It is found in the secreted. The catalysed reaction is Preferential cleavage of bonds with bulky hydrophobic groups in P2 and P1'. Phe at P1' is the most favored residue, which distinguished this enzyme from thermolysin.. Extracellular zinc metalloprotease. In Vibrio proteolyticus (Aeromonas proteolytica), this protein is Neutral protease (nprV).